Reading from the N-terminus, the 115-residue chain is NADH-ubiquinone oxidoreductase chain 3 (115 aa).

A run of 3 helical transmembrane segments spans residues 3 to 23 (LVMALLTNTALASLLVLIAFW), 55 to 75 (FFLVAITFLLFDLEVALLLPL), and 86 to 106 (TMLIMALTLISLLAISLAYEW).

The protein belongs to the complex I subunit 3 family. In terms of assembly, core subunit of respiratory chain NADH dehydrogenase (Complex I) which is composed of 45 different subunits. Interacts with TMEM186. Interacts with TMEM242.

The protein resides in the mitochondrion inner membrane. The catalysed reaction is a ubiquinone + NADH + 5 H(+)(in) = a ubiquinol + NAD(+) + 4 H(+)(out). Functionally, core subunit of the mitochondrial membrane respiratory chain NADH dehydrogenase (Complex I) which catalyzes electron transfer from NADH through the respiratory chain, using ubiquinone as an electron acceptor. Essential for the catalytic activity of complex I. The protein is NADH-ubiquinone oxidoreductase chain 3 of Hippopotamus amphibius (Hippopotamus).